A 211-amino-acid polypeptide reads, in one-letter code: Uracil phosphoribosyltransferase (211 aa).

5-phospho-alpha-D-ribose 1-diphosphate contacts are provided by residues Arg78, Arg103, and 130-138 (DPMLATGGT). Uracil contacts are provided by residues Ile195 and 200–202 (GDA). Asp201 lines the 5-phospho-alpha-D-ribose 1-diphosphate pocket.

It belongs to the UPRTase family. The cofactor is Mg(2+).

The catalysed reaction is UMP + diphosphate = 5-phospho-alpha-D-ribose 1-diphosphate + uracil. Its pathway is pyrimidine metabolism; UMP biosynthesis via salvage pathway; UMP from uracil: step 1/1. With respect to regulation, allosterically activated by GTP. Functionally, catalyzes the conversion of uracil and 5-phospho-alpha-D-ribose 1-diphosphate (PRPP) to UMP and diphosphate. The polypeptide is Uracil phosphoribosyltransferase (Streptomyces griseus subsp. griseus (strain JCM 4626 / CBS 651.72 / NBRC 13350 / KCC S-0626 / ISP 5235)).